A 242-amino-acid chain; its full sequence is Ribose-5-phosphate isomerase A (242 aa).

Substrate-binding positions include 39–42 (SGST), 95–98 (DGAD), and 108–111 (KGGG). The active-site Proton acceptor is the glutamate 117. Lysine 135 contributes to the substrate binding site.

Belongs to the ribose 5-phosphate isomerase family. As to quaternary structure, homodimer.

The catalysed reaction is aldehydo-D-ribose 5-phosphate = D-ribulose 5-phosphate. Its pathway is carbohydrate degradation; pentose phosphate pathway; D-ribose 5-phosphate from D-ribulose 5-phosphate (non-oxidative stage): step 1/1. Catalyzes the reversible conversion of ribose-5-phosphate to ribulose 5-phosphate. The sequence is that of Ribose-5-phosphate isomerase A from Chlamydia trachomatis serovar L2 (strain ATCC VR-902B / DSM 19102 / 434/Bu).